We begin with the raw amino-acid sequence, 313 residues long: Ribosomal RNA small subunit methyltransferase H (313 aa).

Residues 35-37 (GGH), Asp55, Phe80, Asp102, and Gln109 contribute to the S-adenosyl-L-methionine site.

Belongs to the methyltransferase superfamily. RsmH family.

The protein localises to the cytoplasm. It catalyses the reaction cytidine(1402) in 16S rRNA + S-adenosyl-L-methionine = N(4)-methylcytidine(1402) in 16S rRNA + S-adenosyl-L-homocysteine + H(+). Specifically methylates the N4 position of cytidine in position 1402 (C1402) of 16S rRNA. This Shewanella denitrificans (strain OS217 / ATCC BAA-1090 / DSM 15013) protein is Ribosomal RNA small subunit methyltransferase H.